The sequence spans 240 residues: 7-cyano-7-deazaguanine synthase (240 aa).

18–28 (FSGGQDSTTCL) contributes to the ATP binding site. Positions 197, 206, 209, and 212 each coordinate Zn(2+).

Belongs to the QueC family. Zn(2+) is required as a cofactor.

The catalysed reaction is 7-carboxy-7-deazaguanine + NH4(+) + ATP = 7-cyano-7-deazaguanine + ADP + phosphate + H2O + H(+). It functions in the pathway purine metabolism; 7-cyano-7-deazaguanine biosynthesis. Functionally, catalyzes the ATP-dependent conversion of 7-carboxy-7-deazaguanine (CDG) to 7-cyano-7-deazaguanine (preQ(0)). This is 7-cyano-7-deazaguanine synthase from Shewanella putrefaciens (strain CN-32 / ATCC BAA-453).